Reading from the N-terminus, the 546-residue chain is 2-isopropylmalate synthase (546 aa).

Residues 8–271 form the Pyruvate carboxyltransferase domain; it reads ILIFDTTLRD…NSFFGRSSDS (264 aa). Mn(2+)-binding residues include aspartate 17, histidine 208, histidine 210, and asparagine 244. Residues 408–546 form a regulatory domain region; the sequence is QLSHVQVSCG…EKKVFSNPKN (139 aa).

The protein belongs to the alpha-IPM synthase/homocitrate synthase family. LeuA type 1 subfamily. As to quaternary structure, homodimer. Mn(2+) is required as a cofactor.

The protein resides in the cytoplasm. It catalyses the reaction 3-methyl-2-oxobutanoate + acetyl-CoA + H2O = (2S)-2-isopropylmalate + CoA + H(+). Its pathway is amino-acid biosynthesis; L-leucine biosynthesis; L-leucine from 3-methyl-2-oxobutanoate: step 1/4. Functionally, catalyzes the condensation of the acetyl group of acetyl-CoA with 3-methyl-2-oxobutanoate (2-ketoisovalerate) to form 3-carboxy-3-hydroxy-4-methylpentanoate (2-isopropylmalate). The sequence is that of 2-isopropylmalate synthase from Prochlorococcus marinus (strain MIT 9515).